Here is a 147-residue protein sequence, read N- to C-terminus: UPF0735 ACT domain-containing protein ABC1543 (147 aa).

The 76-residue stretch at 70 to 145 (TFSINLADRS…SVERVELVGS (76 aa)) folds into the ACT domain.

This sequence belongs to the UPF0735 family.

The protein is UPF0735 ACT domain-containing protein ABC1543 of Shouchella clausii (strain KSM-K16) (Alkalihalobacillus clausii).